The chain runs to 501 residues: Bifunctional purine biosynthesis protein PurH (501 aa).

The 144-residue stretch at 1–144 folds into the MGS-like domain; it reads MKKRALISVF…KNFKDVVVLS (144 aa).

It belongs to the PurH family.

The catalysed reaction is (6R)-10-formyltetrahydrofolate + 5-amino-1-(5-phospho-beta-D-ribosyl)imidazole-4-carboxamide = 5-formamido-1-(5-phospho-D-ribosyl)imidazole-4-carboxamide + (6S)-5,6,7,8-tetrahydrofolate. It catalyses the reaction IMP + H2O = 5-formamido-1-(5-phospho-D-ribosyl)imidazole-4-carboxamide. It participates in purine metabolism; IMP biosynthesis via de novo pathway; 5-formamido-1-(5-phospho-D-ribosyl)imidazole-4-carboxamide from 5-amino-1-(5-phospho-D-ribosyl)imidazole-4-carboxamide (10-formyl THF route): step 1/1. Its pathway is purine metabolism; IMP biosynthesis via de novo pathway; IMP from 5-formamido-1-(5-phospho-D-ribosyl)imidazole-4-carboxamide: step 1/1. The chain is Bifunctional purine biosynthesis protein PurH from Clostridium perfringens (strain 13 / Type A).